The sequence spans 62 residues: Cryptic Mu-phage protein com (62 aa).

Belongs to the com family.

The protein is Cryptic Mu-phage protein com of Shigella dysenteriae.